The following is a 957-amino-acid chain: MSLVSQNSRRRRRRVAKATAHNSSWDEMQAPNAPGFPADMPGSDVPQGPSDSQILQGLCASEGPSTSVLPTSAEGPSTFVPPTISEASSASGQPTVSEGPGTSLLATPSEGLSTSGPPTISKGLCTSVTLAASEGRNTSRPPTSSEEPSTSVPATPGEGTSTSVPPTASEGPSTSVVPTPDEGPSTSVQSTAGEGPSTPVPLTATEGLSTSVPDTPDEGLSTSVPPTATEGLSTPVPPTPDEGPSTSMPATPGEGRSTTMLPAASDGQSISLVPTPGKGSSTSGPPTATEGLSTSVQPTAGEGPSTSVPPTPCGGLSTSVPPTPGEGLSTSVPPTATEGLSTSVPPTPGEGPSTSVLPTPGEGRSTSVPPTASDGSDTSVPPTPGEGPSTLVQPTASDRPGSSVLPNPGEGPSTLFSSSASVDRNPSKCSIVLPSPRVTKASVDSDSEGPKGAEGPIEFEVLRDCESPNSITIMGLSTPRVAITLKPQDPMEQNVAELLQFLLVKDQSKYPIRESEMREYIVKEYRNQFPEILRRAAAHLECIFRFELRELDPEARTYILLNKLGPVPFEGLEESPNGPKMGLLMMILGQIFLNGNQAKEAEICEMLWRMGVQRERRLSIFGNPKRLLSVEFVWQRYLDYRPVTDCKPVEYEFFWGPRSHLETTKMKILKFMAKIYNKDPMDWPEQYNEALEEDAARAFAEGWQALPHFRRPFFEEAAAEVASPDSEVSSYSSKYAPHSWPESRLESKARKLVQLFLLMDSTKLPIPKEGILYYIGRECSKVFPDLLNRAARTLNHVYGTELVVLDPRNHSYTLYNRREMEETEEIVDSPNRPGNNFLMQVLSFIFIMGNHARESAVWAFLRGLGVQSGRKHVITCRYLSQRYIDSLRVPDSDPVQYEFVWGPRARLETSKMKALRYVARIHRKEPQDWPQQYREAMEDEANRADVGHRQFFVHNFR.

The segment at 1-433 (MSLVSQNSRR…RNPSKCSIVL (433 aa)) is disordered. Composition is skewed to polar residues over residues 85 to 96 (SEASSASGQPTV) and 104 to 130 (LLAT…SVTL). Over residues 138 to 156 (TSRPPTSSEEPSTSVPATP) the composition is skewed to low complexity. Composition is skewed to polar residues over residues 158 to 177 (EGTS…TSVV), 220 to 232 (LSTS…TEGL), 256 to 306 (RSTT…GPST), 328 to 344 (LSTS…STSV), 364 to 380 (RSTS…DTSV), and 414 to 428 (TLFS…NPSK). MAGE domains lie at 491–690 (MEQN…YNEA) and 745–936 (LESK…YREA). An interaction with DTNA region spans residues 743 to 957 (SRLESKARKL…HRQFFVHNFR (215 aa)).

Interacts with DTNA. Interacts with TRIM28.

The protein resides in the cytoplasm. It localises to the perinuclear region. The protein localises to the nucleus. It is found in the cell membrane. In terms of biological role, may enhance ubiquitin ligase activity of RING-type zinc finger-containing E3 ubiquitin-protein ligases. Proposed to act through recruitment and/or stabilization of the Ubl-conjugating enzyme (E2) at the E3:substrate complex. In Macaca fascicularis (Crab-eating macaque), this protein is Melanoma-associated antigen E1 (MAGEE1).